Here is a 33-residue protein sequence, read N- to C-terminus: Photosystem II reaction center protein Psb30 (33 aa).

The chain crosses the membrane as a helical span at residues 7–27 (IQLGSLTLITLTGPLIIGIIF).

Belongs to the Psb30/Ycf12 family. As to quaternary structure, PSII is composed of 1 copy each of membrane proteins PsbA, PsbB, PsbC, PsbD, PsbE, PsbF, PsbH, PsbI, PsbJ, PsbK, PsbL, PsbM, PsbT, PsbY, PsbZ, Psb30/Ycf12, peripheral proteins of the oxygen-evolving complex and a large number of cofactors. It forms dimeric complexes.

Its subcellular location is the plastid. It is found in the chloroplast thylakoid membrane. A core subunit of photosystem II (PSII), probably helps stabilize the reaction center. The polypeptide is Photosystem II reaction center protein Psb30 (Euglena gracilis).